A 331-amino-acid polypeptide reads, in one-letter code: Isopenicillin N synthase (331 aa).

Isopenicillin N-binding residues include R87, Y91, S183, and Y189. N-[(5S)-5-amino-5-carboxypentanoyl]-L-cysteinyl-D-valine is bound by residues R87, Y91, S183, Y189, H214, and D216. The 113-residue stretch at 176–288 folds into the Fe2OG dioxygenase domain; the sequence is KPDDTLASVV…RQSLPFFVNL (113 aa). 3 residues coordinate Fe(2+): H214, D216, and H270. 2-oxoglutarate is bound at residue R279. Position 281 (S281) interacts with isopenicillin N. Position 281 (S281) interacts with N-[(5S)-5-amino-5-carboxypentanoyl]-L-cysteinyl-D-valine.

This sequence belongs to the iron/ascorbate-dependent oxidoreductase family. In terms of assembly, monomer. Fe(2+) is required as a cofactor.

It localises to the cytoplasm. The protein localises to the cytosol. The catalysed reaction is N-[(5S)-5-amino-5-carboxypentanoyl]-L-cysteinyl-D-valine + O2 = isopenicillin N + 2 H2O. It functions in the pathway antibiotic biosynthesis; penicillin G biosynthesis; penicillin G from L-alpha-aminoadipate and L-cysteine and L-valine: step 2/3. Its function is as follows. Isopenicillin N synthase; part of the gene cluster that mediates the biosynthesis of penicillin, the world's most important antibiotic. IpnA catalyzes the cyclization of the tripeptide N-[(5S)-5-amino-5-carboxypentanoyl]-L-cysteinyl-D-valine (LLD-ACV or ACV) to form isopenicillin N (IPN) that contains the beta-lactam nucleus. The penicillin biosynthesis occurs via 3 enzymatic steps, the first corresponding to the production of the tripeptide N-[(5S)-5-amino-5-carboxypentanoyl]-L-cysteinyl-D-valine (LLD-ACV or ACV) by the NRPS acvA. The tripeptide ACV is then cyclized to isopenicillin N (IPN) by the isopenicillin N synthase ipnA that forms the beta-lactam nucleus. Finally, the alpha-aminoadipyl side chain is exchanged for phenylacetic acid by the isopenicillin N acyltransferase penDE to yield penicillin in the peroxisomal matrix. The polypeptide is Isopenicillin N synthase (Emericella nidulans (strain FGSC A4 / ATCC 38163 / CBS 112.46 / NRRL 194 / M139) (Aspergillus nidulans)).